The sequence spans 522 residues: Peptide methionine sulfoxide reductase MsrA/MsrB (522 aa).

The Thioredoxin domain maps to 17–174; the sequence is LALGACSPKI…ALALIRDPNA (158 aa). The cysteines at positions 68 and 71 are disulfide-linked. Residues 199 to 354 form a peptide methionine sulfoxide reductase A region; it reads RTIYLAGGCF…PNGYCHIDIR (156 aa). Cys-207 is an active-site residue. Positions 383–506 constitute a MsrB domain; sequence DAELKRTLTE…NGASLKFIPL (124 aa). Cys-440 and Cys-495 are disulfide-bonded. Cys-495 (nucleophile) is an active-site residue.

In the N-terminal section; belongs to the thioredoxin family. The protein in the central section; belongs to the MsrA Met sulfoxide reductase family. This sequence in the C-terminal section; belongs to the MsrB Met sulfoxide reductase family.

The catalysed reaction is L-methionyl-[protein] + [thioredoxin]-disulfide + H2O = L-methionyl-(S)-S-oxide-[protein] + [thioredoxin]-dithiol. The enzyme catalyses [thioredoxin]-disulfide + L-methionine + H2O = L-methionine (S)-S-oxide + [thioredoxin]-dithiol. It carries out the reaction L-methionyl-[protein] + [thioredoxin]-disulfide + H2O = L-methionyl-(R)-S-oxide-[protein] + [thioredoxin]-dithiol. In terms of biological role, has an important function as a repair enzyme for proteins that have been inactivated by oxidation. Catalyzes the reversible oxidation-reduction of methionine sulfoxide in proteins to methionine. This chain is Peptide methionine sulfoxide reductase MsrA/MsrB (msrAB), found in Neisseria meningitidis serogroup A / serotype 4A (strain DSM 15465 / Z2491).